Reading from the N-terminus, the 326-residue chain is ELAV-like protein 1-B (326 aa).

RRM domains are found at residues 20–98 (TNLI…FARP), 106–186 (ANLY…FAAN), and 244–322 (WCIF…FKTS).

Belongs to the RRM elav family. As to quaternary structure, interacts (via RRM3) with cirbp. Unable to form oligomers. Part of a ribonucleoprotein (RNP) complex, at least composed of elavl1/elrA and/or elavl2/elrB, igf2bp3/vg1RBP, ddx6/Xp54, ybx2/frgy2, lsm14b/rap55b and, in a subset of RNP complexes, stau1/staufen.

The protein resides in the cytoplasm. It localises to the cell cortex. Its function is as follows. RNA-binding protein that binds to the 3'-UTR region of mRNAs and increases their stability. Involved in embryonic stem cells (ESCs) differentiation: preferentially binds mRNAs that are not methylated by N6-methyladenosine (m6A), stabilizing them, promoting ESCs differentiation. Binds to poly-U elements and AU-rich elements (AREs) in the 3'-UTR of target mRNAs. Acts cooperatively with cribp to stabilize AU-rich sequence (ARE)-containing mRNAs. May play a role during gastrulation. Required for the vegetal localization of vg1 mRNA. This chain is ELAV-like protein 1-B (elavl1-b), found in Xenopus laevis (African clawed frog).